The primary structure comprises 337 residues: ATP-dependent 6-phosphofructokinase (337 aa).

An ATP-binding site is contributed by G11. 21-25 is an ADP binding site; it reads RAVVR. Residues 72–73 and 102–105 each bind ATP; these read RY and GDGS. Mg(2+) is bound at residue D103. A substrate-binding site is contributed by 125–127; that stretch reads TID. D127 acts as the Proton acceptor in catalysis. R154 is a binding site for ADP. Substrate contacts are provided by residues R162 and 169-171; that span reads MGR. ADP-binding positions include 185-187, K212, and 214-216; these read GAD and KNH. Residues E223, R245, and 251 to 254 contribute to the substrate site; that span reads HILR.

It belongs to the phosphofructokinase type A (PFKA) family. ATP-dependent PFK group I subfamily. Prokaryotic clade 'B1' sub-subfamily. As to quaternary structure, homotetramer. Requires Mg(2+) as cofactor.

It is found in the cytoplasm. The enzyme catalyses beta-D-fructose 6-phosphate + ATP = beta-D-fructose 1,6-bisphosphate + ADP + H(+). The protein operates within carbohydrate degradation; glycolysis; D-glyceraldehyde 3-phosphate and glycerone phosphate from D-glucose: step 3/4. With respect to regulation, allosterically activated by ADP and other diphosphonucleosides, and allosterically inhibited by phosphoenolpyruvate. In terms of biological role, catalyzes the phosphorylation of D-fructose 6-phosphate to fructose 1,6-bisphosphate by ATP, the first committing step of glycolysis. The chain is ATP-dependent 6-phosphofructokinase from Streptococcus pyogenes serotype M1.